The chain runs to 425 residues: 3-phosphoshikimate 1-carboxyvinyltransferase (425 aa).

3 residues coordinate 3-phosphoshikimate: Lys-22, Ser-23, and Arg-27. Lys-22 contributes to the phosphoenolpyruvate binding site. 2 residues coordinate phosphoenolpyruvate: Gly-95 and Arg-123. 3-phosphoshikimate is bound by residues Ser-169, Ser-170, Gln-171, Ser-197, Asp-313, Asn-336, and Lys-340. Gln-171 contacts phosphoenolpyruvate. The Proton acceptor role is filled by Asp-313. Phosphoenolpyruvate contacts are provided by Arg-344, Arg-386, and Lys-411.

It belongs to the EPSP synthase family. Monomer.

The protein localises to the cytoplasm. It carries out the reaction 3-phosphoshikimate + phosphoenolpyruvate = 5-O-(1-carboxyvinyl)-3-phosphoshikimate + phosphate. It functions in the pathway metabolic intermediate biosynthesis; chorismate biosynthesis; chorismate from D-erythrose 4-phosphate and phosphoenolpyruvate: step 6/7. Its function is as follows. Catalyzes the transfer of the enolpyruvyl moiety of phosphoenolpyruvate (PEP) to the 5-hydroxyl of shikimate-3-phosphate (S3P) to produce enolpyruvyl shikimate-3-phosphate and inorganic phosphate. The chain is 3-phosphoshikimate 1-carboxyvinyltransferase from Pseudoalteromonas translucida (strain TAC 125).